Reading from the N-terminus, the 360-residue chain is DNA replication and repair protein RecF (360 aa).

Glycine 33–threonine 40 contacts ATP.

Belongs to the RecF family.

It is found in the cytoplasm. The RecF protein is involved in DNA metabolism; it is required for DNA replication and normal SOS inducibility. RecF binds preferentially to single-stranded, linear DNA. It also seems to bind ATP. The protein is DNA replication and repair protein RecF of Rickettsia typhi (strain ATCC VR-144 / Wilmington).